The primary structure comprises 111 residues: WAP four-disulfide core domain protein 12 (111 aa).

The first 23 residues, 1-23 (MRSSRFLVLMVSLALVTLVASEG), serve as a signal peptide directing secretion. Residues 27–74 (NTEKPGVCPADNVRCIKSDPPQCHTDQDCQGIRKCCYLHCGFKCVIPV) enclose the WAP domain. 4 cysteine pairs are disulfide-bonded: Cys34-Cys62, Cys41-Cys66, Cys49-Cys61, and Cys55-Cys70.

It localises to the secreted. Antibacterial protein. Putative acid-stable proteinase inhibitor. The chain is WAP four-disulfide core domain protein 12 (WFDC12) from Saimiri boliviensis boliviensis (Bolivian squirrel monkey).